The following is a 472-amino-acid chain: 3-isopropylmalate dehydratase large subunit (472 aa).

Residues Cys347, Cys407, and Cys410 each coordinate [4Fe-4S] cluster.

This sequence belongs to the aconitase/IPM isomerase family. LeuC type 1 subfamily. Heterodimer of LeuC and LeuD. [4Fe-4S] cluster serves as cofactor.

The catalysed reaction is (2R,3S)-3-isopropylmalate = (2S)-2-isopropylmalate. It functions in the pathway amino-acid biosynthesis; L-leucine biosynthesis; L-leucine from 3-methyl-2-oxobutanoate: step 2/4. Its function is as follows. Catalyzes the isomerization between 2-isopropylmalate and 3-isopropylmalate, via the formation of 2-isopropylmaleate. This Bacillus velezensis (strain DSM 23117 / BGSC 10A6 / LMG 26770 / FZB42) (Bacillus amyloliquefaciens subsp. plantarum) protein is 3-isopropylmalate dehydratase large subunit.